The primary structure comprises 547 residues: MTITVEPSVTTGPIAGSAKAYREIEAPGSGATLQVPFRRVHLSTGDHFDLYDTSGPYTDTDTVIDLTAGLPHRPGVVRDRGTQLQRARAGEITAEMAFIAAREDMSAELVRDEVARGRAVIPANHHHPESEPMIIGKAFAVKVNANIGNSAVTSSIAEEVDKMVWATRWGADTIMDLSTGKNIHETREWILRNSPVPVGTVPIYQALEKVKGDPTELTWEIYRDTVIEQCEQGVDYMTVHAGVLLRYVPLTAKRVTGIVSRGGSIMAAWCLAHHRESFLYTNFEELCDIFARYDVTFSLGDGLRPGSIADANDAAQFAELRTLGELTKIAKAHGAQVMIEGPGHIPMHKIVENVRLEEELCEEAPFYTLGPLATDIAPAYDHITSAIGAAIIAQAGTAMLCYVTPKEHLGLPDRKDVKDGVIAYKIAAHAADLAKGHPRAQERDDALSTARFEFRWNDQFALSLDPDTAREFHDETLPAEPAKTAHFCSMCGPKFCSMRITQDVREYAAEHGLETEADIEAVLAAGMAEKSREFAEHGNRVYLPITQ.

Substrate contacts are provided by residues asparagine 146, methionine 175, tyrosine 204, histidine 240, 260–262, 301–304, and glutamate 340; these read SRG and DGLR. Histidine 344 provides a ligand contact to Zn(2+). Tyrosine 367 serves as a coordination point for substrate. A Zn(2+)-binding site is contributed by histidine 408. Residues cysteine 488, cysteine 491, and cysteine 496 each contribute to the [4Fe-4S] cluster site.

It belongs to the ThiC family. Requires [4Fe-4S] cluster as cofactor.

It carries out the reaction 5-amino-1-(5-phospho-beta-D-ribosyl)imidazole + S-adenosyl-L-methionine = 4-amino-2-methyl-5-(phosphooxymethyl)pyrimidine + CO + 5'-deoxyadenosine + formate + L-methionine + 3 H(+). It participates in cofactor biosynthesis; thiamine diphosphate biosynthesis. Catalyzes the synthesis of the hydroxymethylpyrimidine phosphate (HMP-P) moiety of thiamine from aminoimidazole ribotide (AIR) in a radical S-adenosyl-L-methionine (SAM)-dependent reaction. The chain is Phosphomethylpyrimidine synthase from Mycobacterium bovis (strain ATCC BAA-935 / AF2122/97).